We begin with the raw amino-acid sequence, 46 residues long: Diuretic hormone (46 aa).

The residue at position 46 (Ile46) is an Isoleucine amide.

This sequence belongs to the sauvagine/corticotropin-releasing factor/urotensin I family.

Its subcellular location is the secreted. Functionally, regulation of fluid secretion. Stimulates primary urine secretion by Malpighian tubules and causes a dose-dependent stimulation of cAMP levels in the tubules. In Periplaneta americana (American cockroach), this protein is Diuretic hormone.